Consider the following 259-residue polypeptide: MRQATRKGLMTMAAATGVIAAAGGAAHADSGAHGTSSGSPGVLSGNTVQAPVHVPVNVCGNTVDVVGVLNPAMGNACANQGGGASGGHGGHGGHGGYGDSGGEGGSHGGSHAGGHATDSPGVGSGNHVEVPIDVPVNVCGNSIDVVGALNPTTGNDCGNGGGGDHSTPPGDHETPPGEPHNPGNPGNPDTPDKPSGPDDETPGDSTDGNRPGAQTVDQPRGDAALAETGSDLPLGLALPVGAGALLAGTVLYRKARASV.

An N-terminal signal peptide occupies residues 1 to 28 (MRQATRKGLMTMAAATGVIAAAGGAAHA). A Chaplin 1 domain is found at 39-79 (SPGVLSGNTVQAPVHVPVNVCGNTVDVVGVLNPAMGNACAN). Residues 84–112 (ASGGHGGHGGHGGYGDSGGEGGSHGGSHA) are compositionally biased toward gly residues. Disordered stretches follow at residues 84–129 (ASGG…NHVE) and 154–227 (GNDC…ALAE). In terms of domain architecture, Chaplin 2 spans 119 to 159 (SPGVGSGNHVEVPIDVPVNVCGNSIDVVGALNPTTGNDCGN). Residues 180–189 (HNPGNPGNPD) are compositionally biased toward low complexity. An LPXTG sorting signal motif is present at residues 225–229 (LAETG). Thr-228 is modified (pentaglycyl murein peptidoglycan amidated threonine). A propeptide spans 229-259 (GSDLPLGLALPVGAGALLAGTVLYRKARASV) (removed by sortase).

This sequence belongs to the chaplin family. Long chaplin subfamily.

It is found in the secreted. The protein resides in the cell wall. Its function is as follows. One of 8 partially redundant surface-active proteins required for efficient formation of aerial mycelium; the short chaplins assemble into a hydrophobic, amyloidal fibrillar surface layer that envelopes and protects aerial hyphae and spores, presumably anchored to the long chaplins. Chaplins have an overlapping function with the surface-active SapB peptide; chaplins are essential on minimal medium while on rich medium both chaplins and SapB are required for efficient aerial hyphae formation. A minimal chaplin strain capable of forming aerial mycelium/hyphae on minimal medium contains ChpC, ChpE and ChpH. The strain also has restored rodlet formation on the hyphae surface. The long chaplins (ChpA, ChpB, ChpC) are not absolutely necessary for short chaplin localization or rodlet formation, but probably play a role in initiating aerial hyphae development. Chaplins are also involved in cell attachment to a hydrophobic surface. In Streptomyces coelicolor (strain ATCC BAA-471 / A3(2) / M145), this protein is Chaplin-C.